Reading from the N-terminus, the 138-residue chain is Aspartate 1-decarboxylase (138 aa).

S25 serves as the catalytic Schiff-base intermediate with substrate; via pyruvic acid. Residue S25 is modified to Pyruvic acid (Ser). T57 provides a ligand contact to substrate. Y58 serves as the catalytic Proton donor. G73 to A75 contacts substrate.

It belongs to the PanD family. In terms of assembly, heterooctamer of four alpha and four beta subunits. It depends on pyruvate as a cofactor. In terms of processing, is synthesized initially as an inactive proenzyme, which is activated by self-cleavage at a specific serine bond to produce a beta-subunit with a hydroxyl group at its C-terminus and an alpha-subunit with a pyruvoyl group at its N-terminus.

The protein resides in the cytoplasm. It catalyses the reaction L-aspartate + H(+) = beta-alanine + CO2. The protein operates within cofactor biosynthesis; (R)-pantothenate biosynthesis; beta-alanine from L-aspartate: step 1/1. Catalyzes the pyruvoyl-dependent decarboxylation of aspartate to produce beta-alanine. In Renibacterium salmoninarum (strain ATCC 33209 / DSM 20767 / JCM 11484 / NBRC 15589 / NCIMB 2235), this protein is Aspartate 1-decarboxylase.